Consider the following 530-residue polypeptide: Bifunctional purine biosynthesis protein PurH (530 aa).

The MGS-like domain maps to 1–148; sequence MEQARPIRRA…KNHKDVAIVV (148 aa).

This sequence belongs to the PurH family.

It carries out the reaction (6R)-10-formyltetrahydrofolate + 5-amino-1-(5-phospho-beta-D-ribosyl)imidazole-4-carboxamide = 5-formamido-1-(5-phospho-D-ribosyl)imidazole-4-carboxamide + (6S)-5,6,7,8-tetrahydrofolate. The enzyme catalyses IMP + H2O = 5-formamido-1-(5-phospho-D-ribosyl)imidazole-4-carboxamide. It functions in the pathway purine metabolism; IMP biosynthesis via de novo pathway; 5-formamido-1-(5-phospho-D-ribosyl)imidazole-4-carboxamide from 5-amino-1-(5-phospho-D-ribosyl)imidazole-4-carboxamide (10-formyl THF route): step 1/1. It participates in purine metabolism; IMP biosynthesis via de novo pathway; IMP from 5-formamido-1-(5-phospho-D-ribosyl)imidazole-4-carboxamide: step 1/1. The protein is Bifunctional purine biosynthesis protein PurH of Aeromonas hydrophila subsp. hydrophila (strain ATCC 7966 / DSM 30187 / BCRC 13018 / CCUG 14551 / JCM 1027 / KCTC 2358 / NCIMB 9240 / NCTC 8049).